Reading from the N-terminus, the 440-residue chain is Phosphatidylcholine-sterol acyltransferase (440 aa).

A signal peptide spans 1 to 24; it reads MGPPGSPWQWVLLLLGLLLPPAAP. Asn44 carries an N-linked (GlcNAc...) asparagine glycan. Cys74 and Cys98 form a disulfide bridge. The N-linked (GlcNAc...) asparagine glycan is linked to Asn108. The active-site Nucleophile is Ser205. The N-linked (GlcNAc...) asparagine glycan is linked to Asn296. Cys337 and Cys380 are joined by a disulfide. Active-site charge relay system residues include Asp369 and His401. N-linked (GlcNAc...) asparagine glycosylation is present at Asn408.

This sequence belongs to the AB hydrolase superfamily. Lipase family. As to expression, detected in blood plasma (at protein level). Highly expressed in liver.

The protein resides in the secreted. The catalysed reaction is a sterol + a 1,2-diacyl-sn-glycero-3-phosphocholine = a sterol ester + a 1-acyl-sn-glycero-3-phosphocholine. The enzyme catalyses a 1-O-alkyl-2-acetyl-sn-glycero-3-phosphocholine + H2O = a 1-O-alkyl-sn-glycero-3-phosphocholine + acetate + H(+). It carries out the reaction a 1-hexadecanoyl-2-acyl-sn-glycero-3-phosphocholine + (24S)-hydroxycholesterol = (24S)-24-hydroxycholesterol ester + 1-hexadecanoyl-sn-glycero-3-phosphocholine. It catalyses the reaction (24S)-hydroxycholesterol + 1-hexadecanoyl-2-(9Z,12Z-octadecadienoyl)-sn-glycero-3-phosphocholine = (24S)-hydroxycholesterol 3-linoleoate + 1-hexadecanoyl-sn-glycero-3-phosphocholine. The catalysed reaction is 1-hexadecanoyl-2-(5Z,8Z,11Z,14Z-eicosatetraenoyl)-sn-glycero-3-phosphocholine + cholesterol = cholesteryl (5Z,8Z,11Z,14Z)-eicosatetraenoate + 1-hexadecanoyl-sn-glycero-3-phosphocholine. The enzyme catalyses 1-hexadecanoyl-2-(9Z-octadecenoyl)-sn-glycero-3-phosphocholine + cholesterol = cholesteryl (9Z-octadecenoate) + 1-hexadecanoyl-sn-glycero-3-phosphocholine. It carries out the reaction 1-hexadecanoyl-2-(8Z,11Z,14Z-eicosatrienoyl)-sn-glycero-3-phosphocholine + cholesterol = cholesteryl (8Z,11Z,14Z)-eicosatrienoate + 1-hexadecanoyl-sn-glycero-3-phosphocholine. It catalyses the reaction 1-hexadecanoyl-2-(5Z,8Z,11Z-eicosatrienoyl)-sn-glycero-3-phosphocholine + cholesterol = cholesteryl (5Z,8Z,11Z)-eicosatrienoate + 1-hexadecanoyl-sn-glycero-3-phosphocholine. The catalysed reaction is 1-hexadecanoyl-2-(5Z,8Z,11Z,14Z,17Z-eicosapentaenoyl)-sn-glycero-3-phosphocholine + cholesterol = (5Z,8Z,11Z,14Z,17Z-eicosapentaenoyl)-cholesterol + 1-hexadecanoyl-sn-glycero-3-phosphocholine. The enzyme catalyses 1-hexadecanoyl-2-(9Z,12Z-octadecadienoyl)-sn-glycero-3-phosphocholine + cholesterol = cholesteryl (9Z,12Z)-octadecadienoate + 1-hexadecanoyl-sn-glycero-3-phosphocholine. It carries out the reaction 1-hexadecanoyl-2-(6Z,9Z,12Z-octadecatrienoyl)-sn-glycero-3-phosphocholine + cholesterol = (6Z,9Z,12Z-octadecatrienoyl)-cholesterol + 1-hexadecanoyl-sn-glycero-3-phosphocholine. It catalyses the reaction 1-hexadecanoyl-2-(11Z,14Z,17Z-eicosatrienoyl)-sn-glycero-3-phosphocholine + cholesterol = (11Z,14Z,17Z-eicosatrienoyl)-cholesterol + 1-hexadecanoyl-sn-glycero-3-phosphocholine. The catalysed reaction is 1-hexadecanoyl-2-(9Z,12Z,15Z-octadecatrienoyl)-sn-glycero-3-phosphocholine + cholesterol = (9Z,12Z,15Z-octadecatrienoyl)-cholesterol + 1-hexadecanoyl-sn-glycero-3-phosphocholine. The enzyme catalyses 1-hexadecanoyl-2-(9Z,12Z-octadecadienoyl)-sn-glycero-3-phosphocholine + H2O = (9Z,12Z)-octadecadienoate + 1-hexadecanoyl-sn-glycero-3-phosphocholine + H(+). It carries out the reaction 1-hexadecanoyl-2-(5Z,8Z,11Z,14Z-eicosatetraenoyl)-sn-glycero-3-phosphocholine + H2O = 1-hexadecanoyl-sn-glycero-3-phosphocholine + (5Z,8Z,11Z,14Z)-eicosatetraenoate + H(+). It catalyses the reaction a 1-O-alkyl-2-acetyl-sn-glycero-3-phosphocholine + 1-hexadecanoyl-sn-glycero-3-phosphocholine = 1-hexadecanoyl-2-acetyl-sn-glycero-3-phosphocholine + a 1-O-alkyl-sn-glycero-3-phosphocholine. Functionally, central enzyme in the extracellular metabolism of plasma lipoproteins. Synthesized mainly in the liver and secreted into plasma where it converts cholesterol and phosphatidylcholines (lecithins) to cholesteryl esters and lysophosphatidylcholines on the surface of high and low density lipoproteins (HDLs and LDLs). The cholesterol ester is then transported back to the liver. Also produced in the brain by primary astrocytes, and esterifies free cholesterol on nascent APOE-containing lipoproteins secreted from glia and influences cerebral spinal fluid (CSF) APOE- and APOA1 levels. Together with APOE and the cholesterol transporter ABCA1, plays a key role in the maturation of glial-derived, nascent lipoproteins. Required for remodeling high-density lipoprotein particles into their spherical forms. Has a preference for plasma 16:0-18:2 or 18:O-18:2 phosphatidylcholines. Catalyzes the hydrolysis of 1-O-alkyl-2-acetyl-sn-glycero-3-phosphocholine (platelet-activating factor or PAF) to 1-O-alkyl-sn-glycero-3-phosphocholine (lyso-PAF). Also catalyzes the transfer of the acetate group from PAF to 1-hexadecanoyl-sn-glycero-3-phosphocholine forming lyso-PAF. Catalyzes the esterification of (24S)-hydroxycholesterol (24(S)OH-C), also known as cerebrosterol to produce 24(S)OH-C monoesters. In Oryctolagus cuniculus (Rabbit), this protein is Phosphatidylcholine-sterol acyltransferase (LCAT).